We begin with the raw amino-acid sequence, 92 residues long: Small ribosomal subunit protein uS17 (92 aa).

The protein belongs to the universal ribosomal protein uS17 family. As to quaternary structure, part of the 30S ribosomal subunit.

Its function is as follows. One of the primary rRNA binding proteins, it binds specifically to the 5'-end of 16S ribosomal RNA. The sequence is that of Small ribosomal subunit protein uS17 from Mycoplasma mobile (strain ATCC 43663 / 163K / NCTC 11711) (Mesomycoplasma mobile).